The primary structure comprises 307 residues: Ornithine carbamoyltransferase (307 aa).

Carbamoyl phosphate contacts are provided by residues 51 to 54, glutamine 78, arginine 102, and 129 to 132; these read STRT and HPVQ. L-ornithine is bound by residues asparagine 159, aspartate 223, and 227 to 228; that span reads SM. Residues 263–264 and arginine 291 contribute to the carbamoyl phosphate site; that span reads CL.

Belongs to the aspartate/ornithine carbamoyltransferase superfamily. OTCase family.

The protein resides in the cytoplasm. The catalysed reaction is carbamoyl phosphate + L-ornithine = L-citrulline + phosphate + H(+). The protein operates within amino-acid biosynthesis; L-arginine biosynthesis; L-arginine from L-ornithine and carbamoyl phosphate: step 1/3. Reversibly catalyzes the transfer of the carbamoyl group from carbamoyl phosphate (CP) to the N(epsilon) atom of ornithine (ORN) to produce L-citrulline. This chain is Ornithine carbamoyltransferase, found in Wolinella succinogenes (strain ATCC 29543 / DSM 1740 / CCUG 13145 / JCM 31913 / LMG 7466 / NCTC 11488 / FDC 602W) (Vibrio succinogenes).